A 61-amino-acid chain; its full sequence is Large ribosomal subunit protein eL37 (61 aa).

Residues Cys19, Cys22, Cys34, and Cys37 each contribute to the Zn(2+) site. A C4-type zinc finger spans residues 19–37; that stretch reads CRRCGRNAYNVSKHYCAAC.

Belongs to the eukaryotic ribosomal protein eL37 family. Zn(2+) is required as a cofactor.

In terms of biological role, binds to the 23S rRNA. The chain is Large ribosomal subunit protein eL37 (rpl37e) from Saccharolobus solfataricus (strain ATCC 35092 / DSM 1617 / JCM 11322 / P2) (Sulfolobus solfataricus).